We begin with the raw amino-acid sequence, 109 residues long: Nucleoid-associated protein Ldb1634 (109 aa).

The disordered stretch occupies residues 18–40; that stretch reads MMKQAKKLQEQMAQEQENITTQE.

This sequence belongs to the YbaB/EbfC family. Homodimer.

The protein resides in the cytoplasm. Its subcellular location is the nucleoid. Its function is as follows. Binds to DNA and alters its conformation. May be involved in regulation of gene expression, nucleoid organization and DNA protection. The chain is Nucleoid-associated protein Ldb1634 from Lactobacillus delbrueckii subsp. bulgaricus (strain ATCC 11842 / DSM 20081 / BCRC 10696 / JCM 1002 / NBRC 13953 / NCIMB 11778 / NCTC 12712 / WDCM 00102 / Lb 14).